A 196-amino-acid chain; its full sequence is Holliday junction branch migration complex subunit RuvA (196 aa).

The tract at residues 1 to 63 is domain I; sequence MISFVSGRVA…EDSLTLYGFA (63 aa). The tract at residues 64-136 is domain II; the sequence is DDDERTVFEL…LKDRLGTPST (73 aa). The segment at 136-140 is flexible linker; it reads TAAAE. The segment at 141–196 is domain III; sequence STSGWRDAVHAGLLNLGYTARQADEAIAAIAGELDDSAAVDTATALRLALATLKRP.

This sequence belongs to the RuvA family. In terms of assembly, homotetramer. Forms an RuvA(8)-RuvB(12)-Holliday junction (HJ) complex. HJ DNA is sandwiched between 2 RuvA tetramers; dsDNA enters through RuvA and exits via RuvB. An RuvB hexamer assembles on each DNA strand where it exits the tetramer. Each RuvB hexamer is contacted by two RuvA subunits (via domain III) on 2 adjacent RuvB subunits; this complex drives branch migration. In the full resolvosome a probable DNA-RuvA(4)-RuvB(12)-RuvC(2) complex forms which resolves the HJ.

It is found in the cytoplasm. In terms of biological role, the RuvA-RuvB-RuvC complex processes Holliday junction (HJ) DNA during genetic recombination and DNA repair, while the RuvA-RuvB complex plays an important role in the rescue of blocked DNA replication forks via replication fork reversal (RFR). RuvA specifically binds to HJ cruciform DNA, conferring on it an open structure. The RuvB hexamer acts as an ATP-dependent pump, pulling dsDNA into and through the RuvAB complex. HJ branch migration allows RuvC to scan DNA until it finds its consensus sequence, where it cleaves and resolves the cruciform DNA. In Acidothermus cellulolyticus (strain ATCC 43068 / DSM 8971 / 11B), this protein is Holliday junction branch migration complex subunit RuvA.